We begin with the raw amino-acid sequence, 1399 residues long: DNA-directed RNA polymerase subunit beta' (1399 aa).

Zn(2+)-binding residues include Cys70, Cys72, Cys85, and Cys88. Mg(2+)-binding residues include Asp460, Asp462, and Asp464. Residues Cys814, Cys888, Cys895, and Cys898 each contribute to the Zn(2+) site.

It belongs to the RNA polymerase beta' chain family. The RNAP catalytic core consists of 2 alpha, 1 beta, 1 beta' and 1 omega subunit. When a sigma factor is associated with the core the holoenzyme is formed, which can initiate transcription. The cofactor is Mg(2+). It depends on Zn(2+) as a cofactor.

The enzyme catalyses RNA(n) + a ribonucleoside 5'-triphosphate = RNA(n+1) + diphosphate. DNA-dependent RNA polymerase catalyzes the transcription of DNA into RNA using the four ribonucleoside triphosphates as substrates. In Pseudomonas fluorescens (strain Pf0-1), this protein is DNA-directed RNA polymerase subunit beta'.